Reading from the N-terminus, the 267-residue chain is 4-hydroxy-tetrahydrodipicolinate reductase (267 aa).

10–15 (GANGRM) contributes to the NAD(+) binding site. NADP(+) is bound at residue Arg-37. Residues 98–100 (GTT) and 122–125 (ARNY) each bind NAD(+). His-155 functions as the Proton donor/acceptor in the catalytic mechanism. Residue His-156 participates in (S)-2,3,4,5-tetrahydrodipicolinate binding. The active-site Proton donor is the Lys-159. 165-166 (GT) contacts (S)-2,3,4,5-tetrahydrodipicolinate.

Belongs to the DapB family.

Its subcellular location is the cytoplasm. The enzyme catalyses (S)-2,3,4,5-tetrahydrodipicolinate + NAD(+) + H2O = (2S,4S)-4-hydroxy-2,3,4,5-tetrahydrodipicolinate + NADH + H(+). It carries out the reaction (S)-2,3,4,5-tetrahydrodipicolinate + NADP(+) + H2O = (2S,4S)-4-hydroxy-2,3,4,5-tetrahydrodipicolinate + NADPH + H(+). It functions in the pathway amino-acid biosynthesis; L-lysine biosynthesis via DAP pathway; (S)-tetrahydrodipicolinate from L-aspartate: step 4/4. Functionally, catalyzes the conversion of 4-hydroxy-tetrahydrodipicolinate (HTPA) to tetrahydrodipicolinate. The protein is 4-hydroxy-tetrahydrodipicolinate reductase of Pseudoalteromonas translucida (strain TAC 125).